A 213-amino-acid polypeptide reads, in one-letter code: Citrate synthase, mitochondrial (213 aa).

His-74 is a catalytic residue. 2 positions are modified to N6-acetyllysine; alternate: Lys-94 and Lys-100. An N6-succinyllysine; alternate mark is found at Lys-94 and Lys-100. His-120 is an active-site residue. Residue Arg-129 participates in oxaloacetate binding. Lys-148 carries the post-translational modification N6-acetyllysine; alternate. Position 148 is an N6-succinyllysine; alternate (Lys-148). Lys-155 is modified (N6-acetyllysine). Lys-166 carries the N6-acetyllysine; alternate modification. The residue at position 166 (Lys-166) is an N6-succinyllysine; alternate. At Lys-168 the chain carries N6,N6,N6-trimethyllysine. Asp-175 is a catalytic residue. Arg-201 serves as a coordination point for oxaloacetate.

This sequence belongs to the citrate synthase family. As to quaternary structure, homodimer. In response to mitochondrial stress, the precursor protein is ubiquitinated by the SIFI complex in the cytoplasm before mitochondrial import, leading to its degradation. Within the SIFI complex, UBR4 initiates ubiquitin chain that are further elongated or branched by KCMF1.

The protein localises to the mitochondrion matrix. The enzyme catalyses oxaloacetate + acetyl-CoA + H2O = citrate + CoA + H(+). Its pathway is carbohydrate metabolism; tricarboxylic acid cycle; isocitrate from oxaloacetate: step 1/2. Key enzyme of the Krebs tricarboxylic acid cycle which catalyzes the synthesis of citrate from acetyl coenzyme A and oxaloacetate. The sequence is that of Citrate synthase, mitochondrial from Mesocricetus auratus (Golden hamster).